The sequence spans 450 residues: MGVALIVLAAGQGSRMNSELPKVLHPLAGAPLLAHGLRAGAALDPARIVVVTGHGAAAVEAATAQLAPEAICVRQTEQLGTGHAVAQTAQALAGFGGDALVLYGDTPFISPETLLAMQAARAAGADMVVLGFEAADPGRYGRLVTDGDALLRIVEAKDATPDELALDLCNSGVMMADAQVLLRLVAGLSNDNASREYYLTDTIAAGRAEGLRARVVVCPEAETLGINTRTELAAAEQAFQARARARALEDGVTLADPATTHFAVDTVIGRDATIGPQVVFGPGVTVESGAEIRAFSHLEGCHVSRGARVGPFARLRPGAELAENTHVGNFVEIKNATLAQGAKVNHLSYIGDAAIGEASNVGAGTITCNYDGVFKHRTEIGARSFIGSNTCLVAPVRVGDEAMTATGTVVTQDIPDGAMAVGRTRQENKPGFARKFMTMLRARKSAKGAQ.

Residues 1-229 form a pyrophosphorylase region; the sequence is MGVALIVLAA…EAETLGINTR (229 aa). UDP-N-acetyl-alpha-D-glucosamine-binding positions include 8–11, lysine 22, glutamine 75, 80–81, 103–105, glycine 141, glutamate 155, asparagine 170, and asparagine 227; these read LAAG, GT, and YGD. A Mg(2+)-binding site is contributed by aspartate 105. A Mg(2+)-binding site is contributed by asparagine 227. The tract at residues 230 to 250 is linker; that stretch reads TELAAAEQAFQARARARALED. An N-acetyltransferase region spans residues 251–450; sequence GVTLADPATT…RARKSAKGAQ (200 aa). Residues arginine 316 and lysine 334 each contribute to the UDP-N-acetyl-alpha-D-glucosamine site. Histidine 346 (proton acceptor) is an active-site residue. Tyrosine 349 and asparagine 360 together coordinate UDP-N-acetyl-alpha-D-glucosamine. Residues alanine 363, 369-370, serine 388, threonine 406, and arginine 423 contribute to the acetyl-CoA site; that span reads NY.

The protein in the N-terminal section; belongs to the N-acetylglucosamine-1-phosphate uridyltransferase family. This sequence in the C-terminal section; belongs to the transferase hexapeptide repeat family. As to quaternary structure, homotrimer. It depends on Mg(2+) as a cofactor.

Its subcellular location is the cytoplasm. It catalyses the reaction alpha-D-glucosamine 1-phosphate + acetyl-CoA = N-acetyl-alpha-D-glucosamine 1-phosphate + CoA + H(+). The enzyme catalyses N-acetyl-alpha-D-glucosamine 1-phosphate + UTP + H(+) = UDP-N-acetyl-alpha-D-glucosamine + diphosphate. The protein operates within nucleotide-sugar biosynthesis; UDP-N-acetyl-alpha-D-glucosamine biosynthesis; N-acetyl-alpha-D-glucosamine 1-phosphate from alpha-D-glucosamine 6-phosphate (route II): step 2/2. Its pathway is nucleotide-sugar biosynthesis; UDP-N-acetyl-alpha-D-glucosamine biosynthesis; UDP-N-acetyl-alpha-D-glucosamine from N-acetyl-alpha-D-glucosamine 1-phosphate: step 1/1. It functions in the pathway bacterial outer membrane biogenesis; LPS lipid A biosynthesis. Its function is as follows. Catalyzes the last two sequential reactions in the de novo biosynthetic pathway for UDP-N-acetylglucosamine (UDP-GlcNAc). The C-terminal domain catalyzes the transfer of acetyl group from acetyl coenzyme A to glucosamine-1-phosphate (GlcN-1-P) to produce N-acetylglucosamine-1-phosphate (GlcNAc-1-P), which is converted into UDP-GlcNAc by the transfer of uridine 5-monophosphate (from uridine 5-triphosphate), a reaction catalyzed by the N-terminal domain. The sequence is that of Bifunctional protein GlmU from Dinoroseobacter shibae (strain DSM 16493 / NCIMB 14021 / DFL 12).